The sequence spans 197 residues: Phosphoheptose isomerase (197 aa).

The 162-residue stretch at 36 to 197 (MVNALLNEGK…IDSQLFGSEE (162 aa)) folds into the SIS domain. 51–53 (NGG) serves as a coordination point for substrate. The Zn(2+) site is built by His60 and Glu64. Residues Glu64, 93–94 (ND), 119–121 (STS), Ser124, and Gln174 contribute to the substrate site. Residues Gln174 and His182 each coordinate Zn(2+).

Belongs to the SIS family. GmhA subfamily. Homotetramer. It depends on Zn(2+) as a cofactor.

The protein localises to the cytoplasm. The catalysed reaction is 2 D-sedoheptulose 7-phosphate = D-glycero-alpha-D-manno-heptose 7-phosphate + D-glycero-beta-D-manno-heptose 7-phosphate. It participates in carbohydrate biosynthesis; D-glycero-D-manno-heptose 7-phosphate biosynthesis; D-glycero-alpha-D-manno-heptose 7-phosphate and D-glycero-beta-D-manno-heptose 7-phosphate from sedoheptulose 7-phosphate: step 1/1. Catalyzes the isomerization of sedoheptulose 7-phosphate in D-glycero-D-manno-heptose 7-phosphate. This chain is Phosphoheptose isomerase, found in Pseudomonas fluorescens (strain SBW25).